We begin with the raw amino-acid sequence, 212 residues long: Adenylate kinase (212 aa).

Residue 10 to 15 (GAGKGT) participates in ATP binding. Positions 30-59 (STGDMFRAAMANQTEMGRLAKSYIDKGELV) are NMP. Residues T31, R36, 57–59 (ELV), 86–89 (GYPR), and Q93 each bind AMP. The LID stretch occupies residues 127 to 159 (GRIINRKTGETFHKVFNPPVDYKEEDYYQREDD). ATP-binding positions include R128 and 137-138 (TF). R156 and R167 together coordinate AMP. Q195 serves as a coordination point for ATP.

The protein belongs to the adenylate kinase family. As to quaternary structure, monomer.

It is found in the cytoplasm. It carries out the reaction AMP + ATP = 2 ADP. It functions in the pathway purine metabolism; AMP biosynthesis via salvage pathway; AMP from ADP: step 1/1. Its function is as follows. Catalyzes the reversible transfer of the terminal phosphate group between ATP and AMP. Plays an important role in cellular energy homeostasis and in adenine nucleotide metabolism. This Streptococcus pyogenes serotype M3 (strain ATCC BAA-595 / MGAS315) protein is Adenylate kinase.